A 194-amino-acid chain; its full sequence is Peptidyl-tRNA hydrolase (194 aa).

Y17 contributes to the tRNA binding site. H22 (proton acceptor) is an active-site residue. Residues Y68, N70, and N116 each contribute to the tRNA site.

Belongs to the PTH family. Monomer.

It is found in the cytoplasm. The catalysed reaction is an N-acyl-L-alpha-aminoacyl-tRNA + H2O = an N-acyl-L-amino acid + a tRNA + H(+). Functionally, hydrolyzes ribosome-free peptidyl-tRNAs (with 1 or more amino acids incorporated), which drop off the ribosome during protein synthesis, or as a result of ribosome stalling. Catalyzes the release of premature peptidyl moieties from peptidyl-tRNA molecules trapped in stalled 50S ribosomal subunits, and thus maintains levels of free tRNAs and 50S ribosomes. The protein is Peptidyl-tRNA hydrolase of Pseudomonas syringae pv. syringae (strain B728a).